The primary structure comprises 247 residues: 3-oxoacyl-[acyl-carrier-protein] reductase MabA (247 aa).

Residues 25 to 27 (RGI), Arg-47, 61 to 62 (DV), Gly-90, Tyr-153, Lys-157, Ile-186, and Arg-197 contribute to the NADP(+) site. Catalysis depends on Tyr-153, which acts as the Proton acceptor.

Belongs to the short-chain dehydrogenases/reductases (SDR) family. In terms of assembly, homotetramer.

The protein resides in the secreted. The protein localises to the cell wall. It carries out the reaction a (3R)-hydroxyacyl-[ACP] + NADP(+) = a 3-oxoacyl-[ACP] + NADPH + H(+). The protein operates within lipid metabolism; mycolic acid biosynthesis. Part of the mycobacterial fatty acid elongation system FAS-II, which is involved in mycolic acid biosynthesis. Catalyzes the NADPH-dependent reduction of beta-ketoacyl derivatives, the second step of the FAS-II elongation cycle. The chain is 3-oxoacyl-[acyl-carrier-protein] reductase MabA from Mycobacterium bovis (strain ATCC BAA-935 / AF2122/97).